A 51-amino-acid polypeptide reads, in one-letter code: 2,3,4,5-tetrahydropyridine-2,6-dicarboxylate N-succinyltransferase (51 aa).

It belongs to the transferase hexapeptide repeat family. In terms of assembly, homotrimer.

It localises to the cytoplasm. The catalysed reaction is (S)-2,3,4,5-tetrahydrodipicolinate + succinyl-CoA + H2O = (S)-2-succinylamino-6-oxoheptanedioate + CoA. The protein operates within amino-acid biosynthesis; L-lysine biosynthesis via DAP pathway; LL-2,6-diaminopimelate from (S)-tetrahydrodipicolinate (succinylase route): step 1/3. The protein is 2,3,4,5-tetrahydropyridine-2,6-dicarboxylate N-succinyltransferase (dapD) of Klebsiella oxytoca.